Here is a 438-residue protein sequence, read N- to C-terminus: Trigger factor (438 aa).

Positions 160-245 (DDKVTIDFVG…VKKIQQAELP (86 aa)) constitute a PPIase FKBP-type domain.

Belongs to the FKBP-type PPIase family. Tig subfamily.

The protein localises to the cytoplasm. The catalysed reaction is [protein]-peptidylproline (omega=180) = [protein]-peptidylproline (omega=0). Functionally, involved in protein export. Acts as a chaperone by maintaining the newly synthesized protein in an open conformation. Functions as a peptidyl-prolyl cis-trans isomerase. The protein is Trigger factor of Francisella tularensis subsp. novicida (strain U112).